A 54-amino-acid chain; its full sequence is Large ribosomal subunit protein bL32c (54 aa).

The protein belongs to the bacterial ribosomal protein bL32 family.

It is found in the plastid. Its subcellular location is the chloroplast. The chain is Large ribosomal subunit protein bL32c from Lactuca sativa (Garden lettuce).